The chain runs to 286 residues: Bifunctional protein FolD (286 aa).

Residues 168–170 (GRG), threonine 195, and valine 236 each bind NADP(+).

The protein belongs to the tetrahydrofolate dehydrogenase/cyclohydrolase family. In terms of assembly, homodimer.

It carries out the reaction (6R)-5,10-methylene-5,6,7,8-tetrahydrofolate + NADP(+) = (6R)-5,10-methenyltetrahydrofolate + NADPH. It catalyses the reaction (6R)-5,10-methenyltetrahydrofolate + H2O = (6R)-10-formyltetrahydrofolate + H(+). It functions in the pathway one-carbon metabolism; tetrahydrofolate interconversion. In terms of biological role, catalyzes the oxidation of 5,10-methylenetetrahydrofolate to 5,10-methenyltetrahydrofolate and then the hydrolysis of 5,10-methenyltetrahydrofolate to 10-formyltetrahydrofolate. The protein is Bifunctional protein FolD of Mycolicibacterium gilvum (strain PYR-GCK) (Mycobacterium gilvum (strain PYR-GCK)).